The following is a 466-amino-acid chain: MPHSWDYDAVVIGSGPGGEGAAMGLVKQGARVAVIERYHNVGGGCTHWGTIPSKALRHAVSRIIEFNHNPLYSDHSRLLRSSFADILNHADNVINQQTRMRQGFYERNHCEILQGNAHFIDEHTLALECHDGTVETLTAEKFVIACGSRPYHPNDVDFSHPRIYDSDSILSLHHEPRHVIIYGAGVIGCEYASIFRGMDVKVDLINTRDRLLAFLDQEMSDSLSYHFWNSGVVIRHNEEYEKIEGCDDGVIMHLKSGKKLKADCLLYANGRTGNTDSLALENIGLETDSRGQLKVNSMYQTALPHVYAVGDVIGYPSLASAAYDQGRIAAQALVKGEATAHLIEDIPTGIYTIPEISSVGKTEQQLTAMKVPYEVGRAQFKHLARAQIVGMNVGTLKILFHRETKEILGIHCFGERAAEIIHIGQAIMEQKGGGNTIEYFVNTTFNYPTMAEAYRVAALNGLNRLF.

36-45 (ERYHNVGGGC) lines the FAD pocket.

This sequence belongs to the class-I pyridine nucleotide-disulfide oxidoreductase family. Requires FAD as cofactor.

Its subcellular location is the cytoplasm. The enzyme catalyses NAD(+) + NADPH = NADH + NADP(+). Its function is as follows. Conversion of NADPH, generated by peripheral catabolic pathways, to NADH, which can enter the respiratory chain for energy generation. In Salmonella gallinarum (strain 287/91 / NCTC 13346), this protein is Soluble pyridine nucleotide transhydrogenase.